The primary structure comprises 463 residues: A-type ATP synthase subunit B (463 aa).

Belongs to the ATPase alpha/beta chains family. As to quaternary structure, has multiple subunits with at least A(3), B(3), C, D, E, F, H, I and proteolipid K(x).

The protein resides in the cell membrane. Component of the A-type ATP synthase that produces ATP from ADP in the presence of a proton gradient across the membrane. The B chain is a regulatory subunit. The protein is A-type ATP synthase subunit B of Methanothermobacter thermautotrophicus (strain ATCC 29096 / DSM 1053 / JCM 10044 / NBRC 100330 / Delta H) (Methanobacterium thermoautotrophicum).